The sequence spans 439 residues: 23S rRNA (uracil(1939)-C(5))-methyltransferase RlmD (439 aa).

In terms of domain architecture, TRAM spans 10-69 (KTQLNTRHQAVQVERLDHHGAGIAYLKKKPLFIDGALPGEEVVTQLVEEKSKFARGKLIK). [4Fe-4S] cluster-binding residues include C82, C88, C91, and C169. Q272, F301, N306, E322, N349, and D370 together coordinate S-adenosyl-L-methionine. The Nucleophile role is filled by C396.

This sequence belongs to the class I-like SAM-binding methyltransferase superfamily. RNA M5U methyltransferase family. RlmD subfamily.

The catalysed reaction is uridine(1939) in 23S rRNA + S-adenosyl-L-methionine = 5-methyluridine(1939) in 23S rRNA + S-adenosyl-L-homocysteine + H(+). Functionally, catalyzes the formation of 5-methyl-uridine at position 1939 (m5U1939) in 23S rRNA. This chain is 23S rRNA (uracil(1939)-C(5))-methyltransferase RlmD, found in Vibrio parahaemolyticus serotype O3:K6 (strain RIMD 2210633).